The primary structure comprises 313 residues: Ribosomal RNA small subunit methyltransferase H (313 aa).

Residues 48–50, aspartate 68, phenylalanine 102, aspartate 120, and glutamine 127 each bind S-adenosyl-L-methionine; that span reads GGH. Residues 290 to 313 are disordered; it reads TATEEEIDRNPRSRSAKLRAAARK. Basic residues predominate over residues 301 to 313; sequence RSRSAKLRAAARK.

The protein belongs to the methyltransferase superfamily. RsmH family.

The protein localises to the cytoplasm. It carries out the reaction cytidine(1402) in 16S rRNA + S-adenosyl-L-methionine = N(4)-methylcytidine(1402) in 16S rRNA + S-adenosyl-L-homocysteine + H(+). Functionally, specifically methylates the N4 position of cytidine in position 1402 (C1402) of 16S rRNA. In Koribacter versatilis (strain Ellin345), this protein is Ribosomal RNA small subunit methyltransferase H.